The primary structure comprises 172 residues: Translation initiation factor IF-3 (172 aa).

Belongs to the IF-3 family. Monomer.

It is found in the cytoplasm. Its function is as follows. IF-3 binds to the 30S ribosomal subunit and shifts the equilibrium between 70S ribosomes and their 50S and 30S subunits in favor of the free subunits, thus enhancing the availability of 30S subunits on which protein synthesis initiation begins. In Campylobacter jejuni subsp. doylei (strain ATCC BAA-1458 / RM4099 / 269.97), this protein is Translation initiation factor IF-3.